The following is a 176-amino-acid chain: Ribosome maturation factor RimM (176 aa).

In terms of domain architecture, PRC barrel spans 93–166 (EGEYYHADLI…RVVIEMPGEI (74 aa)).

Belongs to the RimM family. Binds ribosomal protein uS19.

It localises to the cytoplasm. In terms of biological role, an accessory protein needed during the final step in the assembly of 30S ribosomal subunit, possibly for assembly of the head region. Essential for efficient processing of 16S rRNA. May be needed both before and after RbfA during the maturation of 16S rRNA. It has affinity for free ribosomal 30S subunits but not for 70S ribosomes. The polypeptide is Ribosome maturation factor RimM (Rhodopseudomonas palustris (strain BisA53)).